The chain runs to 310 residues: MSQNLIRIATRKSPLAMWQAEFVKAELEKIHEGLTVELLPMSTKGDIILDTPLAKVGGKGLFVKELEVAMLEGLADIAVHSMKDVPVDFPEGLGLEVICEREDPRDAFVSNTYKTIEDLPQGAVVGTSSLRRQCQIRAARPDLVIKDLRGNVGTRLAKLDAGNYDAIILAAAGLKRLKLEERIASFISAEQSLPANGQGAVGIECRTDDARVKALLAPLEHAETRMRVTAERAMNTRLEGGCQVPIGAYAEIDGDTLSLRGLVGNPDGSQIITASSSGSTADAEKLGVALAEELLSKGAKTILDAVYANA.

Cys-242 carries the S-(dipyrrolylmethanemethyl)cysteine modification.

It belongs to the HMBS family. In terms of assembly, monomer. The cofactor is dipyrromethane.

The enzyme catalyses 4 porphobilinogen + H2O = hydroxymethylbilane + 4 NH4(+). It functions in the pathway porphyrin-containing compound metabolism; protoporphyrin-IX biosynthesis; coproporphyrinogen-III from 5-aminolevulinate: step 2/4. Its function is as follows. Tetrapolymerization of the monopyrrole PBG into the hydroxymethylbilane pre-uroporphyrinogen in several discrete steps. The protein is Porphobilinogen deaminase of Shewanella pealeana (strain ATCC 700345 / ANG-SQ1).